The following is a 396-amino-acid chain: Ribosomal RNA large subunit methyltransferase I (396 aa).

Residues 2–79 (AIRIKLKPGR…REEEIDREFF (78 aa)) form the PUA domain.

Belongs to the methyltransferase superfamily. RlmI family.

The protein resides in the cytoplasm. It carries out the reaction cytidine(1962) in 23S rRNA + S-adenosyl-L-methionine = 5-methylcytidine(1962) in 23S rRNA + S-adenosyl-L-homocysteine + H(+). Its function is as follows. Specifically methylates the cytosine at position 1962 (m5C1962) of 23S rRNA. This is Ribosomal RNA large subunit methyltransferase I from Shewanella oneidensis (strain ATCC 700550 / JCM 31522 / CIP 106686 / LMG 19005 / NCIMB 14063 / MR-1).